The following is a 218-amino-acid chain: Large ribosomal subunit protein uL3 (218 aa).

Residues 126–169 (HGFSRGPMTHGSKNHRQPGSIGAGTTPGRIYPGKRMSGRYGGKK) form a disordered region.

This sequence belongs to the universal ribosomal protein uL3 family. As to quaternary structure, part of the 50S ribosomal subunit. Forms a cluster with proteins L14 and L19.

Its function is as follows. One of the primary rRNA binding proteins, it binds directly near the 3'-end of the 23S rRNA, where it nucleates assembly of the 50S subunit. In Synechococcus sp. (strain CC9902), this protein is Large ribosomal subunit protein uL3.